Here is a 216-residue protein sequence, read N- to C-terminus: Large ribosomal subunit protein eL15 (216 aa).

The segment covering 170–188 has biased composition (basic residues); the sequence is RGLRKSKGFKGTVKHKWSR. The tract at residues 170–201 is disordered; that stretch reads RGLRKSKGFKGTVKHKWSRKQKEREEKKRHEA. Residues 189-201 are compositionally biased toward basic and acidic residues; that stretch reads KQKEREEKKRHEA.

It belongs to the eukaryotic ribosomal protein eL15 family.

This Saccharolobus islandicus (strain M.16.27) (Sulfolobus islandicus) protein is Large ribosomal subunit protein eL15.